A 1213-amino-acid chain; its full sequence is DNA-directed RNA polymerase subunit beta (1213 aa).

Residues 1169-1213 (SRMAEEQEKKKLAEETGKSGDKKENKKDADKPVAPADESDDKVSK) form a disordered region. A compositionally biased stretch (basic and acidic residues) spans 1171 to 1199 (MAEEQEKKKLAEETGKSGDKKENKKDADK).

This sequence belongs to the RNA polymerase beta chain family. As to quaternary structure, the RNAP catalytic core consists of 2 alpha, 1 beta, 1 beta' and 1 omega subunit. When a sigma factor is associated with the core the holoenzyme is formed, which can initiate transcription.

The enzyme catalyses RNA(n) + a ribonucleoside 5'-triphosphate = RNA(n+1) + diphosphate. Its function is as follows. DNA-dependent RNA polymerase catalyzes the transcription of DNA into RNA using the four ribonucleoside triphosphates as substrates. The sequence is that of DNA-directed RNA polymerase subunit beta from Lactobacillus helveticus (strain DPC 4571).